We begin with the raw amino-acid sequence, 1055 residues long: Cell-division control histidine kinase PdhS (1055 aa).

Residues 1–626 (MSGSYPFIDI…RANGSEEPVD (626 aa)) are important for polar localization. Positions 419 to 439 (DDSPVATLPKPPLDIAPTPGR) are disordered. The interval 627-1055 (AHLNAISWRE…AFPPTRVLAD (429 aa)) is interaction with DivK. Residues 679-750 (HVEELKTILD…YLHGLSGNGV (72 aa)) enclose the PAS domain. One can recognise a Histidine kinase domain in the interval 822 to 1051 (RISHEIRTPL…VVEIAFPPTR (230 aa)). H825 is modified (phosphohistidine; by autocatalysis).

As to quaternary structure, interacts with DivK.

The protein localises to the cytoplasm. The catalysed reaction is ATP + protein L-histidine = ADP + protein N-phospho-L-histidine.. In terms of biological role, functions as a polar differentiation marker. Essential protein that, by localizing in the old pole of dividing cells, controls cell division and maturation, probably through control of DivK phosphorylation status and cellular distribution, which in turn regulates CtrA, a transcriptional regulator of the minB operon. The asymmetrical localization of this protein is probably required for cells to enter a new division cycle. In Brucella anthropi (strain ATCC 49188 / DSM 6882 / CCUG 24695 / JCM 21032 / LMG 3331 / NBRC 15819 / NCTC 12168 / Alc 37) (Ochrobactrum anthropi), this protein is Cell-division control histidine kinase PdhS (pdhS).